The following is an 834-amino-acid chain: Membrane-associated lipoprotein (834 aa).

Positions 1-25 (MKKNKLTTLALILPITILTPIVIAS) are cleaved as a signal peptide. Cysteine 26 carries N-palmitoyl cysteine lipidation. The S-diacylglycerol cysteine moiety is linked to residue cysteine 26. In terms of domain architecture, Lipoprotein-associated type-17 spans 143–237 (RLKDTFDFKL…LLEVSGFKSN (95 aa)).

The protein resides in the cell membrane. This Ureaplasma parvum serovar 3 (strain ATCC 700970) protein is Membrane-associated lipoprotein.